Reading from the N-terminus, the 262-residue chain is tRNA pseudouridine synthase A (262 aa).

Asp-52 functions as the Nucleophile in the catalytic mechanism. Tyr-110 is a substrate binding site.

It belongs to the tRNA pseudouridine synthase TruA family. As to quaternary structure, homodimer.

The catalysed reaction is uridine(38/39/40) in tRNA = pseudouridine(38/39/40) in tRNA. Its function is as follows. Formation of pseudouridine at positions 38, 39 and 40 in the anticodon stem and loop of transfer RNAs. The polypeptide is tRNA pseudouridine synthase A (Hydrogenovibrio crunogenus (strain DSM 25203 / XCL-2) (Thiomicrospira crunogena)).